Consider the following 92-residue polypeptide: Dynein light chain 1, cytoplasmic (92 aa).

Belongs to the dynein light chain family. In terms of assembly, homodimer. Cytoplasmic dynein consists of two catalytic heavy chains (HCs) and a number of non-catalytic subunits which present intermediate chains (ICs), light intermediate chains (LICs) and light chains (LCs). Component of the nuclear pore complex (NPC). NPC constitutes the exclusive means of nucleocytoplasmic transport. NPCs allow the passive diffusion of ions and small molecules and the active, nuclear transport receptor-mediated bidirectional transport of macromolecules such as proteins, RNAs, ribonucleoparticles (RNPs), and ribosomal subunits across the nuclear envelope. Due to its 8-fold rotational symmetry, all subunits are present with 8 copies or multiples thereof. Part of the NUP82 subcomplex. In the complex, interacts directly with Nup159.

The protein resides in the cytoplasm. Its subcellular location is the cytoskeleton. The protein localises to the nucleus. It localises to the nuclear pore complex. Its function is as follows. Acts as one of several non-catalytic accessory components of the cytoplasmic dynein complex that are thought to be involved in linking dynein to cargos and to adapter proteins that regulate dynein function. Cytoplasmic dynein 1 acts as a motor for the intracellular retrograde motility of vesicles and organelles along microtubules. May play a role in changing or maintaining the spatial distribution of cytoskeletal structures. Also a component of the nuclear pore complex where it may contribute to the stable association of the Nup82 subcomplex with the NPC. The protein is Dynein light chain 1, cytoplasmic (DYN2) of Saccharomyces cerevisiae (strain ATCC 204508 / S288c) (Baker's yeast).